Reading from the N-terminus, the 435-residue chain is Serine protease snk (435 aa).

An N-terminal signal peptide occupies residues 1-27; the sequence is MIILWSLIVHLQLTCLHLILQTPNLEA. Positions 92–138 constitute a Clip domain; the sequence is FCRRSFDGRSGYCILAYQCLHVIREYRVHGTRIDICTHRNNVPVICC. Intrachain disulfides connect C93/C137, C104/C127, C110/C138, C179/C303, C220/C236, C346/C366, and C377/C408. In terms of domain architecture, Peptidase S1 spans 186-432; it reads IVGGTPTRHG…YLDWIEKIAF (247 aa). Catalysis depends on H235, which acts as the Charge relay system. N255 is a glycosylation site (N-linked (GlcNAc...) asparagine). The Charge relay system role is filled by D283. The active-site Charge relay system is S381.

It belongs to the peptidase S1 family. CLIP subfamily. As to quaternary structure, interacts (via N-terminal prodomain) with ea/easter (via Peptidase domain); leads to proteolytic activation of ea by snk. This interaction does not require sulfation of a vitelline membrane component by pip but proteolytic cleavage of ea by snk does. Proteolytically activated by gd. May also be cleaved by another protease.

It is found in the secreted. Component of the extracellular signaling pathway that establishes the dorsal-ventral pathway of the embryo. A protease cascade involving ndl, gd, snk and ea results in activation of the spz Toll receptor ligand; acts downstream of ndl and gd. Activation of ea requires both activation of the ndl-gd-snk protease cascade and sulfation of a vitelline membrane component by pip. Localized activation of the Toll receptor in the ventral region of the embryo defines cell identities along the dorsal-ventral continuum. This chain is Serine protease snk, found in Drosophila melanogaster (Fruit fly).